Consider the following 113-residue polypeptide: Putative hemolysin E-like protein (113 aa).

This sequence belongs to the hemolysin E family.

This is Putative hemolysin E-like protein from Shigella flexneri.